A 363-amino-acid polypeptide reads, in one-letter code: Pyrimidine monooxygenase RutA (363 aa).

Residues 49–50, N115, E124, 140–141, and S190 each bind FMN; these read IK and RY.

This sequence belongs to the NtaA/SnaA/DszA monooxygenase family. RutA subfamily.

It carries out the reaction uracil + FMNH2 + NADH + O2 = (Z)-3-ureidoacrylate + FMN + NAD(+) + H2O + H(+). The enzyme catalyses thymine + FMNH2 + NADH + O2 = (Z)-2-methylureidoacrylate + FMN + NAD(+) + H2O + H(+). Functionally, catalyzes the pyrimidine ring opening between N-3 and C-4 by an unusual flavin hydroperoxide-catalyzed mechanism, adding oxygen atoms in the process to yield ureidoacrylate peracid, that immediately reacts with FMN forming ureidoacrylate and FMN-N(5)-oxide. The FMN-N(5)-oxide reacts spontaneously with NADH to produce FMN. Requires the flavin reductase RutF to regenerate FMN in vivo. The protein is Pyrimidine monooxygenase RutA of Escherichia coli O6:K15:H31 (strain 536 / UPEC).